A 62-amino-acid polypeptide reads, in one-letter code: Large ribosomal subunit protein bL28 (62 aa).

Positions 1–24 (MARKCVITGRKTKAGNNRSHAMNS) are disordered. Positions 14–24 (AGNNRSHAMNS) are enriched in polar residues.

It belongs to the bacterial ribosomal protein bL28 family.

In Bacillus pumilus (strain SAFR-032), this protein is Large ribosomal subunit protein bL28.